Here is a 222-residue protein sequence, read N- to C-terminus: Urease accessory protein UreF (222 aa).

This sequence belongs to the UreF family. UreD, UreF and UreG form a complex that acts as a GTP-hydrolysis-dependent molecular chaperone, activating the urease apoprotein by helping to assemble the nickel containing metallocenter of UreC. The UreE protein probably delivers the nickel.

The protein resides in the cytoplasm. Its function is as follows. Required for maturation of urease via the functional incorporation of the urease nickel metallocenter. The sequence is that of Urease accessory protein UreF from Roseobacter denitrificans (strain ATCC 33942 / OCh 114) (Erythrobacter sp. (strain OCh 114)).